We begin with the raw amino-acid sequence, 627 residues long: MIYDYGYDVIVVGGGHAGVEAASASARIGAKTLLLTHNIDTIGQMSCNPAIGGIGKGHLVKEIDAMGGVMAKAIDMAGIQFRILNSRKGPAVRATRAQADRLLYKKAINSLINNQENLDIFQDSVDDLVVENNTVCGAITKTGITFRAKKVVLTVGTFLGGKIHIGKVSNAGGRAGDQPSNALAARLRSLPFRVDRLKTGTPPRIDRRSVDFSVMEVQHGDNPTPYFSFFSKGKIEHPRQIPCYITYTNNETHKIITDNLDKSAMYSGLIEGIGPRYCPSIEDKVVRFADKERHQIFVEPEGLNSIELYPNGLSTSLPFEVQCNYIRSIKGFEKAFIMRPGYAIEYDFFDPRDLKPTLETKHIKNLYFAGQINGTTGYEEAGAQGLVASINAAISIDSDKSWYPTRADSYIGVLIDDLITKGTKEPYRMFTSRAEYRLILREDNADLRLSDKACELGLLSKEDQQHFISKKNAIIENIAMMKNTWIGPQTQKARDLEKFLDKKMTRESTLFDLLKRPEIDYSKLQQISELNLNLQDDAVIEQIEISAKYSGYIERQNKDIEKTATLEQKAIPTDFNYSQVKGLSNEVLQKLTEQKPTTLGEASRIPGITPAAISLLTIYMKKTGFIK.

FAD is bound by residues 13 to 18 (GGGHAG), Val-125, and Ser-180. 274–288 (GPRYCPSIEDKVVRF) is an NAD(+) binding site. Gln-371 lines the FAD pocket.

This sequence belongs to the MnmG family. In terms of assembly, homodimer. Heterotetramer of two MnmE and two MnmG subunits. The cofactor is FAD.

The protein localises to the cytoplasm. Functionally, NAD-binding protein involved in the addition of a carboxymethylaminomethyl (cmnm) group at the wobble position (U34) of certain tRNAs, forming tRNA-cmnm(5)s(2)U34. In Francisella tularensis subsp. tularensis (strain WY96-3418), this protein is tRNA uridine 5-carboxymethylaminomethyl modification enzyme MnmG.